A 164-amino-acid chain; its full sequence is Peptidyl-prolyl cis-trans isomerase CYP18-2 (164 aa).

Residues 12–162 enclose the PPIase cyclophilin-type domain; sequence VTLETSMGPF…HEVKILRTKV (151 aa).

The protein belongs to the cyclophilin-type PPIase family. In terms of tissue distribution, ubiquitous.

The protein localises to the cytoplasm. It catalyses the reaction [protein]-peptidylproline (omega=180) = [protein]-peptidylproline (omega=0). Functionally, PPIases accelerate the folding of proteins. It catalyzes the cis-trans isomerization of proline imidic peptide bonds in oligopeptides. The polypeptide is Peptidyl-prolyl cis-trans isomerase CYP18-2 (CYP18-2) (Arabidopsis thaliana (Mouse-ear cress)).